A 239-amino-acid polypeptide reads, in one-letter code: Ribonuclease HII (239 aa).

One can recognise an RNase H type-2 domain in the interval 30 to 221 (GPVAGVDEVG…VRRVANGSGG (192 aa)). Positions 36, 37, and 130 each coordinate a divalent metal cation.

It belongs to the RNase HII family. Requires Mn(2+) as cofactor. Mg(2+) is required as a cofactor.

It is found in the cytoplasm. The catalysed reaction is Endonucleolytic cleavage to 5'-phosphomonoester.. Its function is as follows. Endonuclease that specifically degrades the RNA of RNA-DNA hybrids. This is Ribonuclease HII from Mycolicibacterium paratuberculosis (strain ATCC BAA-968 / K-10) (Mycobacterium paratuberculosis).